A 30-amino-acid chain; its full sequence is Conotoxin CcTx (30 aa).

Pro-2 is subject to 4-hydroxyproline. Ser-7 carries O-linked (HexNAc...) serine glycosylation. 3 disulfide bridges follow: Cys-12/Cys-21, Cys-13/Cys-26, and Cys-24/Cys-30. Pro-17 and Pro-22 each carry 4-hydroxyproline.

O-glycosylated at Ser-7 by a core type 9 glycan, containing both D- and L-galactose units (alpha-L-Galp-(1-&gt;4)-alpha-D- GlcpNAc-(1-&gt;6)-[alpha-L-Galp-(1-&gt;2)-bets-D-Galp-(1-&gt;3)-]alpha-D-GalpNAc-(1-&gt;O)). Expressed by the venom duct.

Its subcellular location is the secreted. May specifically activate neuronal voltage-gated sodium channels (Nav) at the resting membrane potential. Causes a marked contraction and extension of the caudal and dorsal fins in fish and noticeable spontaneous contractions of isolated frog neuromuscular preparations. The sequence is that of Conotoxin CcTx from Conus consors (Singed cone).